Consider the following 396-residue polypeptide: Chaperone protein DnaJ (396 aa).

In terms of domain architecture, J spans 6 to 71; it reads DYYEVLEVTK…DKRSRYDQFG (66 aa). The segment at 154-236 adopts a CR-type zinc-finger fold; that stretch reads GVEKKFKLKK…CGGDGIVYGE (83 aa). Cysteine 167, cysteine 170, cysteine 184, cysteine 187, cysteine 210, cysteine 213, cysteine 224, and cysteine 227 together coordinate Zn(2+). 4 CXXCXGXG motif repeats span residues 167-174, 184-191, 210-217, and 224-231; these read CNHCHGTG, CPTCKGSG, CPTCNGEG, and CKECGGDG.

It belongs to the DnaJ family. Homodimer. Zn(2+) is required as a cofactor.

Its subcellular location is the cytoplasm. Its function is as follows. Participates actively in the response to hyperosmotic and heat shock by preventing the aggregation of stress-denatured proteins and by disaggregating proteins, also in an autonomous, DnaK-independent fashion. Unfolded proteins bind initially to DnaJ; upon interaction with the DnaJ-bound protein, DnaK hydrolyzes its bound ATP, resulting in the formation of a stable complex. GrpE releases ADP from DnaK; ATP binding to DnaK triggers the release of the substrate protein, thus completing the reaction cycle. Several rounds of ATP-dependent interactions between DnaJ, DnaK and GrpE are required for fully efficient folding. Also involved, together with DnaK and GrpE, in the DNA replication of plasmids through activation of initiation proteins. This Bacteroides thetaiotaomicron (strain ATCC 29148 / DSM 2079 / JCM 5827 / CCUG 10774 / NCTC 10582 / VPI-5482 / E50) protein is Chaperone protein DnaJ.